The primary structure comprises 260 residues: Troponin I 3 (260 aa).

Over residues 192–219 (DLDEIMAKKKGTADGKPEWSKKEKKEEE) the composition is skewed to basic and acidic residues. Positions 192–260 (DLDEIMAKKK…EEEEEEEEEE (69 aa)) are disordered. Residues 231-260 (PEAEPEPEAAEPAAEEPEAEEEEEEEEEEE) are compositionally biased toward acidic residues.

The protein belongs to the troponin I family. In terms of tissue distribution, expressed in body wall muscle from first larval stage to adult. In adults expression is predominantly in vulval and anal muscles, body wall muscle expression is weaker. Also expressed in vulval muscles of hermaphrodites and the sex muscles of males.

Functionally, troponin I is the inhibitory subunit of troponin, the thin filament regulatory complex which confers calcium-sensitivity to muscle actomyosin ATPase activity. This Caenorhabditis elegans protein is Troponin I 3 (tni-3).